A 465-amino-acid chain; its full sequence is FAD-dependent monooxygenase olcE (465 aa).

The helical transmembrane segment at 9–29 (IIIGGSVAGLTLALSLNKIGI) threads the bilayer. The FAD site is built by glutamate 35, glycine 49, arginine 108, aspartate 308, and alanine 321.

It belongs to the paxM FAD-dependent monooxygenase family. FAD is required as a cofactor.

It localises to the membrane. Its pathway is secondary metabolite biosynthesis; terpenoid biosynthesis. FAD-dependent monooxygenase; part of the gene cluster that mediates the biosynthesis of 15-deoxyoxalicine B. The first step of the pathway is the synthesis of nicotinyl-CoA from nicotinic acid by the nicotinic acid-CoA ligase olcI. Nicotinyl-CoA is then a substrate of polyketide synthase olcA to produce 4-hydroxy-6-(3-pyridinyl)-2H-pyran-2-one (HPPO) which is further prenylated by the polyprenyl transferase olcH to yield geranylgeranyl-HPPO. Geranylgeranyl pyrophosphate is provided by the cluster-specific geranylgeranyl pyrophosphate synthase olcC. The FAD-dependent monooxygenase olcE catalyzes the epoxidation of geranylgeranyl-HPPO and the terpene cyclase olcD catalyzes the cyclization of the terpenoid component, resulting in the formation of the tricyclic terpene moiety seen in predecaturin E. The cytochrome P450 monooxygenase then catalyzes the allylic oxidation of predecaturin E, which is followed by spirocylization with concomitant loss of one molecule of water to form decaturin E. Decaturin E is the substrate of the cytochrome P450 monooxygenase olcJ which hydroxylates it at the C-29 position to form decaturin F. The short-chain dehydrogenase/reductase olcF may catalyze the oxidation of decaturin F to generate the 29-hydroxyl-27-one intermediate, and subsequent hemiacetal formation probably leads to the formation of decaturin C. The dioxygenase olcK may be a peroxisomal enzyme that catalyzes the hydroxylation of decaturin C into decaturin A once decaturin C is shuttled into the peroxisome by the MFS transporter olcL. Finally the cytochrome P450 monooxygenase olcB catalyzes the oxidative rearrangement to yield 15-deoxyoxalicine B. In the absence of olcJ, decaturin E may be shunted to a pathway in which it is oxidized to a ketone, possibly by olcF, to form decaturin D, which undergoes further allylic oxidation to yield decaturin G. Moreover, in the absence of oclK or oclL, oclB can convert decaturin C into 15-deoxyoxalicine A. The protein is FAD-dependent monooxygenase olcE of Penicillium canescens.